A 141-amino-acid polypeptide reads, in one-letter code: ATP synthase epsilon chain (141 aa).

The protein belongs to the ATPase epsilon chain family. In terms of assembly, F-type ATPases have 2 components, CF(1) - the catalytic core - and CF(0) - the membrane proton channel. CF(1) has five subunits: alpha(3), beta(3), gamma(1), delta(1), epsilon(1). CF(0) has three main subunits: a, b and c.

The protein resides in the cell inner membrane. In terms of biological role, produces ATP from ADP in the presence of a proton gradient across the membrane. The sequence is that of ATP synthase epsilon chain from Halorhodospira halophila (strain DSM 244 / SL1) (Ectothiorhodospira halophila (strain DSM 244 / SL1)).